The primary structure comprises 213 residues: Small ribosomal subunit protein uS5 (213 aa).

The 64-residue stretch at 49-112 folds into the S5 DRBM domain; that stretch reads LEEEVMDVNL…DNAKYNLIKV (64 aa).

Belongs to the universal ribosomal protein uS5 family. As to quaternary structure, part of the 30S ribosomal subunit. Contacts protein S4.

Its function is as follows. With S4 and S12 plays an important role in translational accuracy. The protein is Small ribosomal subunit protein uS5 of Methanobrevibacter smithii (strain ATCC 35061 / DSM 861 / OCM 144 / PS).